The primary structure comprises 312 residues: MNAEIVVNNSNFSSNTPPFLKKQPEIRRYIIQGSRRFSNYWWAFIVCLGSIGFLLTGISSYFEFQNLLHLQNYFSFANEAQSSLNKVELPIILFFPQGLVMCFYGILGLFLSFYLWFSIFLNIGAGFNEIYIYTGETLKTENQYSKSINSNNLKANNWNSSKIKSNLKKFTKMKDTQTIDYSSENELKNQLTNPNSAVCKFAKGGSEVGCWEQSALTPLPPTPLSHIRIFRWGFPGKNRKINLQYSIDQISAIKLEFLQGFNSKRTICLKLSDQREILLTGSPQGDWETFEQLEKQASELAKFLKVNLEFSS.

3 helical membrane passes run 42 to 62 (WAFIVCLGSIGFLLTGISSYF), 91 to 111 (IILFFPQGLVMCFYGILGLFL), and 113 to 133 (FYLWFSIFLNIGAGFNEIYIY).

The protein belongs to the Ycf4 family.

The protein localises to the plastid. The protein resides in the chloroplast thylakoid membrane. Seems to be required for the assembly of the photosystem I complex. The protein is Photosystem I assembly protein Ycf4 of Pleurastrum terricola (Filamentous green alga).